Reading from the N-terminus, the 224-residue chain is MVMVMEKKPYIISNVGMTLDGKLATINNDSRISCEEDLIRVHKIRANVDGIMVGIGTVLKDDPRLTVHKIKSDRNPVRIVVDSKLRVPLNARVLNKDAKTIIATTEDTNEEKEKKIKILEDMGVEVVKCGRGKVDLKKLMDILYDKGIKSILLEGGGTLNWGMFKEGLVDEVSVYIAPKIFGGKEAPTYVDGEGFKTVDECVKLELKNFYRLGEGIVLEFKVKK.

NADP(+)-binding positions include Gly16, Thr57, Asp61, 83–86, Val134, and 156–159; these read SKLR and GGTL.

The protein belongs to the HTP reductase family. As to quaternary structure, homodimer.

The catalysed reaction is 2,5-diamino-6-(1-D-ribitylamino)pyrimidin-4(3H)-one 5'-phosphate + NADP(+) = 2,5-diamino-6-(1-D-ribosylamino)pyrimidin-4(3H)-one 5'-phosphate + NADPH + H(+). It carries out the reaction 2,5-diamino-6-(1-D-ribitylamino)pyrimidin-4(3H)-one 5'-phosphate + NAD(+) = 2,5-diamino-6-(1-D-ribosylamino)pyrimidin-4(3H)-one 5'-phosphate + NADH + H(+). It participates in cofactor biosynthesis; riboflavin biosynthesis. In terms of biological role, catalyzes an early step in riboflavin biosynthesis, the NAD(P)H-dependent reduction of the ribose side chain of 2,5-diamino-6-ribosylamino-4(3H)-pyrimidinone 5'-phosphate, yielding 2,5-diamino-6-ribitylamino-4(3H)-pyrimidinone 5'-phosphate. The beta anomer is the authentic substrate, and the alpha anomer can serve as substrate subsequent to spontaneous anomerization. NADPH and NADH function equally well as the reductants. Does not catalyze the reduction of 5-amino-6-(5-phospho-D-ribosylamino)uracil to 5-amino-6-(5-phospho-D-ribitylamino)uracil. In Methanocaldococcus jannaschii (strain ATCC 43067 / DSM 2661 / JAL-1 / JCM 10045 / NBRC 100440) (Methanococcus jannaschii), this protein is 2,5-diamino-6-ribosylamino-4(3H)-pyrimidinone 5'-phosphate reductase (arfC).